We begin with the raw amino-acid sequence, 188 residues long: dCTP deaminase (188 aa).

Residues 111 to 116, 135 to 137, Gln-156, Tyr-170, Lys-179, and Gln-180 contribute to the dCTP site; these read KSTYAR and TLE. Residue Glu-137 is the Proton donor/acceptor of the active site.

The protein belongs to the dCTP deaminase family. In terms of assembly, homotrimer.

The catalysed reaction is dCTP + H2O + H(+) = dUTP + NH4(+). The protein operates within pyrimidine metabolism; dUMP biosynthesis; dUMP from dCTP (dUTP route): step 1/2. In terms of biological role, catalyzes the deamination of dCTP to dUTP. The sequence is that of dCTP deaminase from Rickettsia felis (strain ATCC VR-1525 / URRWXCal2) (Rickettsia azadi).